The sequence spans 438 residues: Probable tRNA pseudouridine synthase D (438 aa).

The active-site Nucleophile is the aspartate 86. A TRUD domain is found at 165 to 390 (GVPNFFGIQR…SKGTRRELLL (226 aa)).

It belongs to the pseudouridine synthase TruD family.

The enzyme catalyses uridine(13) in tRNA = pseudouridine(13) in tRNA. In terms of biological role, could be responsible for synthesis of pseudouridine from uracil-13 in transfer RNAs. The chain is Probable tRNA pseudouridine synthase D from Methanosarcina barkeri (strain Fusaro / DSM 804).